The chain runs to 421 residues: MKKRLNIGLVGLGCVGSAVAKILQENQEIIKDRAGVGIGIKKAVVRDVKKHKGYPFEISNDLESLIEDEEIDIVVELMGGVEAPYLLAKKTLAKQKAFVTANKAMLAYHRYELEQTAKNTPIGFEASVCGGIPIIKALKDGLSANHILSFKGILNGTSNYILSQMFKNQASFKDALKDAQHLGYAELNPEFDIKGIDAAHKLLILASLAYGIDAKLEEILIEGIEKIEPDDMEFAKEFGYSIKLLGIAKKHPDCIELRVHPSMIKNECMLSKVDGVMNAISVIGDKVGETLYYGAGAGGEPTASAVISDIIEIARKKSSLMLGFETPQKLPLKPKEEIQCAYYARLLVSDEKGVFSQISAILAQNDISLNNVLQKEILHSNKAKILFSTHTTNEKSMLNALKELENLQSVLDTPKMIRLEN.

Valine 15, alanine 34, and valine 44 together coordinate NAD(+). Valine 15 lines the NADP(+) pocket. NADPH is bound at residue valine 15. Residues arginine 46 and lysine 103 each coordinate NADP(+). Residues arginine 46 and lysine 103 each contribute to the NADPH site. Na(+) is bound by residues glutamate 125, valine 128, glycine 130, and isoleucine 132. Glycine 183 and glutamate 186 together coordinate NADP(+). L-homoserine is bound by residues glutamate 186 and aspartate 197. Lysine 201 functions as the Proton donor in the catalytic mechanism. Glycine 298 contacts NAD(+). Glycine 298 lines the NADP(+) pocket. Glycine 298 is an NADPH binding site. One can recognise an ACT domain in the interval 343–418 (YARLLVSDEK…SVLDTPKMIR (76 aa)).

It belongs to the homoserine dehydrogenase family. A metal cation serves as cofactor.

It carries out the reaction L-homoserine + NADP(+) = L-aspartate 4-semialdehyde + NADPH + H(+). It catalyses the reaction L-homoserine + NAD(+) = L-aspartate 4-semialdehyde + NADH + H(+). The protein operates within amino-acid biosynthesis; L-methionine biosynthesis via de novo pathway; L-homoserine from L-aspartate: step 3/3. It participates in amino-acid biosynthesis; L-threonine biosynthesis; L-threonine from L-aspartate: step 3/5. Catalyzes the conversion of L-aspartate-beta-semialdehyde (L-Asa) to L-homoserine (L-Hse), the third step in the biosynthesis of threonine and methionine from aspartate. This chain is Homoserine dehydrogenase (hom), found in Helicobacter pylori (strain ATCC 700392 / 26695) (Campylobacter pylori).